We begin with the raw amino-acid sequence, 54 residues long: UPF0391 membrane protein BAV1230 (54 aa).

Helical transmembrane passes span 5–25 (AAVF…GIAA) and 27–47 (AAGI…LSVL).

It belongs to the UPF0391 family.

Its subcellular location is the cell membrane. In Bordetella avium (strain 197N), this protein is UPF0391 membrane protein BAV1230.